Here is a 657-residue protein sequence, read N- to C-terminus: MPRYTVHVRGEWLAVPCQDAQLTVGWLGREAVRRYIKNKPDNGGFTSVDDAHFLVRRCKGLGLLDNEDRLEVALENNEFVEVVIEGDAMSPDFIPSQPEGVYLYSKYREPEKYIELDGDRLTTEDLVNLGKGRYKIKLTPTAEKRVQKSREVIDSIIKEKTVVYGITTGFGKFARTVIPINKLQELQVNLVRSHSSGVGKPLSPERCRMLLALRINVLAKGYSGISLETLKQVIEMFNASCLPYVPEKGTVGASGDLAPLSHLALGLVGEGKMWSPKSGWADAKYVLEAHGLKPVILKPKEGLALINGTQMITSLGCEAVERASAIARQADIVAALTLEVLKGTTKAFDTDIHALRPHRGQIEVAFRFRSLLDSDHHPSEIAESHRFCDRVQDAYTLRCCPQVHGVVNDTIAFVKNIITTELNSATDNPMVFANRGETVSGGNFHGEYPAKALDYLAIGIHELAAISERRIERLCNPSLSELPAFLVAEGGLNSGFMIAHCTAAALVSENKALCHPSSVDSLSTSAATEDHVSMGGWAARKALRVIEHVEQVLAIELLAACQGIEFLRPLKTTTPLEKVYDLVRSVVRPWIKDRFMAPDIEAAHRLLLEQKVWEVAAPYIEKYRMEHIPESRPLSPTAFSLQFLHKKSTKIPESEDL.

The segment at residues 253–255 (ASG) is a cross-link (5-imidazolinone (Ala-Gly)). Ser254 carries the post-translational modification 2,3-didehydroalanine (Ser). A Phosphothreonine modification is found at Thr396. Ser635 carries the post-translational modification Phosphoserine. Thr637 is modified (phosphothreonine). At Ser648 the chain carries Phosphoserine.

The protein belongs to the PAL/histidase family. In terms of processing, contains an active site 4-methylidene-imidazol-5-one (MIO), which is formed autocatalytically by cyclization and dehydration of residues Ala-Ser-Gly.

The catalysed reaction is L-histidine = trans-urocanate + NH4(+). It participates in amino-acid degradation; L-histidine degradation into L-glutamate; N-formimidoyl-L-glutamate from L-histidine: step 1/3. In Homo sapiens (Human), this protein is Histidine ammonia-lyase (HAL).